The primary structure comprises 1187 residues: Nicotinate dehydrogenase subunit B (1187 aa).

The helical transmembrane segment at 764 to 784 threads the bilayer; it reads WWFGSLAGVFGAALGMLATAL. Cytochrome c domains are found at residues 804–907, 949–1057, and 1075–1163; these read AMLE…MSQT, AQWN…SSLE, and VSLS…RHRF. Heme c contacts are provided by Cys818, Cys821, His822, Cys964, Cys967, His968, Cys1088, Cys1091, and His1092.

Requires Mo-molybdopterin cytosine dinucleotide as cofactor.

The protein localises to the membrane. The catalysed reaction is 2 Fe(III)-[cytochrome] + nicotinate + H2O = 2 Fe(II)-[cytochrome] + 6-hydroxynicotinate + 2 H(+). Its pathway is cofactor degradation; nicotinate degradation. Subunit of the two-component enzyme NicAB that mediates nicotinate hydroxylation, the first step in the aerobic nicotinate degradation pathway. Mediates conversion of nicotinate into 6-hydroxynicotinate (6HNA). This is Nicotinate dehydrogenase subunit B (nicB) from Pseudomonas putida (strain ATCC 47054 / DSM 6125 / CFBP 8728 / NCIMB 11950 / KT2440).